The sequence spans 1137 residues: Ribonucleoside-diphosphate reductase large subunit (1137 aa).

The tract at residues 1 to 32 (MASRPAASSPVEARAPVGGQEAGGPSAATQGE) is disordered. The short motif at 64 to 84 (SYRISDNNFVQCGSNCTMIID) is the RIP homotypic interaction motif (RHIM) element. Disordered regions lie at residues 124–159 (GGTP…FTLG) and 173–315 (AVFG…YPVP). Positions 131-141 (AGTSTGTQTAD) are enriched in polar residues. Positions 196–206 (SDSDDSEDTDS) are enriched in acidic residues. A compositionally biased stretch (low complexity) spans 281-290 (AGAGLAADPA). Positions 291 to 304 (VARDDAEGLSDPRP) are enriched in basic and acidic residues. Residues threonine 566, 581 to 582 (SC), glycine 612, 791 to 795 (NLCTE), and 968 to 972 (PTAAS) each bind substrate. An intrachain disulfide couples cysteine 582 to cysteine 808. The active-site Proton acceptor is asparagine 791. Cysteine 793 functions as the Cysteine radical intermediate in the catalytic mechanism. Catalysis depends on glutamate 795, which acts as the Proton acceptor.

This sequence belongs to the ribonucleoside diphosphate reductase large chain family. As to quaternary structure, heterotetramer composed of a homodimer of the large subunit (R1) and a homodimer of the small subunit (R2). Larger multisubunit protein complex are also active, composed of (R1)n(R2)n. Self-assembles (via RIP homotypic interaction motif/RHIM) into homomeric fibrillar amyloid structures. Interacts (via RHIM) with human RIPK1 (via RHIM). Interacts (via RHIM) with human RIPK3 (via RHIM); the interaction leads to heteromeric amyloid assemblies. Interacts (via RHIM) with human ZBP1 (via RHIM); the interaction leads to heteromeric amyloid assemblies. Interacts (via C-terminus) with host CASP8.

It carries out the reaction a 2'-deoxyribonucleoside 5'-diphosphate + [thioredoxin]-disulfide + H2O = a ribonucleoside 5'-diphosphate + [thioredoxin]-dithiol. Its function is as follows. Ribonucleoside-diphosphate reductase holoenzyme that provides the precursors necessary for viral DNA synthesis. Allows virus growth in non-dividing cells, as well as reactivation from latency in infected hosts. Catalyzes the biosynthesis of deoxyribonucleotides from the corresponding ribonucleotides. Prevents host necroptosis by targeting host RIPK1 and RIPK3, thereby hampering the formation of necroptotic RIPK1-RIPK3 complexes. Forms hetero-amyloid structures with host proteins RIPK3 or ZBP1 which may prevent RIPK3- and ZBP1-mediated necroptosis. In addition, inhibits extrinsic apoptosis by targeting host CASP8. The protein is Ribonucleoside-diphosphate reductase large subunit of Human herpesvirus 1 (strain 17) (HHV-1).